We begin with the raw amino-acid sequence, 372 residues long: Alpha-1,3-mannosyl-glycoprotein 4-beta-N-acetylglucosaminyltransferase-like protein MGAT4D (372 aa).

Over 1–8 (MKTKNVNL) the chain is Cytoplasmic. The chain crosses the membrane as a helical; Signal-anchor for type II membrane protein span at residues 9–29 (LFALVAVLLFGFSCFCISRMN). Over 30 to 372 (QTNNQLINCR…REQHLKDHYY (343 aa)) the chain is Lumenal. 2 N-linked (GlcNAc...) asparagine glycosylation sites follow: Asn-54 and Asn-143.

The protein belongs to the glycosyltransferase 54 family. As to quaternary structure, may self-associate; specifically in the endoplasmic reticulum prior to its translocation to the Golgi. Interacts with MGAT1, MGAT3 and MAN2A2; may interact with MGTA1 specifically in the Golgi. In terms of processing, N-glycosylated. O-glycosylated; further modified with terminal sialic acid residues. As to expression, testis.

The protein resides in the golgi apparatus membrane. It localises to the endoplasmic reticulum membrane. In terms of biological role, may play a role in male spermatogenesis. In vitro acts as inhibitor of MGAT1 activity causing cell surface proteins to carry mainly high mannose N-glycans. The function is mediated by its lumenal domain and occurs specifically in the Golgi. A catalytic glucosyltransferase activity is not detected. May be involved in regulation of Sertoli-germ cell interactions during specific stages of spermatogenesis. The sequence is that of Alpha-1,3-mannosyl-glycoprotein 4-beta-N-acetylglucosaminyltransferase-like protein MGAT4D from Rattus norvegicus (Rat).